A 503-amino-acid polypeptide reads, in one-letter code: LEM domain-containing protein 2 (503 aa).

At A2 the chain carries N-acetylalanine. Residues 2–42 (AGLSDLELRRELQALGFQPGPITDTTRDVYRNKLRRLRGEA) enclose the LEM domain. Positions 42 to 74 (ARLRDEERLREEARPRGEERLREEARLREDAPL) are enriched in basic and acidic residues. Disordered stretches follow at residues 42 to 97 (ARLR…SGSA) and 127 to 157 (AQLR…GPGL). Positions 74–130 (LRARPAAASPRAEPWLSQPASGSAYATPGAYGDIRPSAASWVGSRGLAYPARPAQLR) are required for nuclear retention and interaction with LMNA isoform C. Positions 75–87 (RARPAAASPRAEP) are enriched in low complexity. A phosphoserine mark is found at S166 and S175. The tract at residues 172 to 198 (LPSSLLGPDPRPGLRATRAGPAGAARA) is disordered. Residues 184–197 (GLRATRAGPAGAAR) show a composition bias toward low complexity. The next 2 membrane-spanning stretches (helical) occupy residues 213–233 (LLLW…WVKM) and 377–397 (VTNV…LILL). Residues 395–503 (ILLKYRWRKL…KPSSFSDSER (109 aa)) are winged-Helix (WH). S497, S499, and S501 each carry phosphoserine.

As to quaternary structure, interacts (via N-terminus) with LMNA isoform C (via C-terminus) (in vitro). Interacts (via LEM domain) with BANF1. Interacts (via C-terminus) with CHMP7. Interacts (via N-terminus) with tubulin; the interaction causes microtubule bundling and stabilization (in vitro). Phosphorylated; strongly phosphorylated in mitosis compared to G1/S. Ubiquitously expressed, including bone marrow, brain, kidney, colon, skeletal muscle, thymus, testis and uterus.

The protein resides in the nucleus inner membrane. Its subcellular location is the nucleus envelope. It localises to the cytoplasm. It is found in the cytoskeleton. The protein localises to the spindle. Its function is as follows. Nuclear lamina-associated inner nuclear membrane protein that is involved in nuclear structure organization, maintenance of nuclear envelope (NE) integrity and NE reformation after mitosis. Plays a role as transmembrane adapter for the endosomal sorting complexes required for transport (ESCRT), and is thereby involved in ESCRT-mediated NE reformation. Promotes ESCRT-mediated NE closure by recruiting CHMP7 and downstream ESCRT-III proteins IST1/CHMP8 and CHMP2A to the reforming NE during anaphase. During nuclear reassembly, condenses into a liquid-like coating around microtubule spindles and coassembles with CHMP7 to form a macromolecular O-ring seal at the confluence between membranes, chromatin, and the spindle to facilitate early nuclear sealing. Plays a role in the organization of heterochromatin associated with the NE and in the maintenance of NE organization under mechanical stress. Required for embryonic development and involved in regulation of several signaling pathways such as MAPK and AKT. Required for myoblast differentiation involving regulation of ERK signaling. Essential for cardiac homeostasis and proper heart function. The polypeptide is LEM domain-containing protein 2 (LEMD2) (Homo sapiens (Human)).